A 431-amino-acid chain; its full sequence is MVSLEKNDHLMLARQLPLKSVALILAGGRGTRLKDLTNKRAKPAVHFGGKFRIIDFALSNCINSGIRRMGVITQYQSHTLVQHIQRGWSFFNEEMNEFVDLLPAQQRMKGENWYRGTADAVTQNLDIIRRYKAEYVVILAGDHIYKQDYSHMLIDHVEKGARCTVACMPVPIEEASAFGVMAVDENDKIIEFVEKPANPPSMPNDPSKSLASMGIYVFDADYLYELLEEDDRDENSSHDFGKDLIPKITEAGLAYAHPFPLSCVQSDPDAEPYWRDVGTLEAYWKANLDLASVVPELDMYDRNWPIRTYNESLPPAKFVQDRSGSHGMTLNSLVSGGCVISGSVVVQSVLFSRVRVNSFCNIDSAVLLPEVWVGRSCRLRRCVIDRACVIPEGMVIGENAEEDARRFYRSEEGIVLVTREMLRKLGHKQER.

Lysine 39 is a binding site for beta-D-fructose 1,6-bisphosphate. AMP-binding residues include arginine 40, histidine 46, and arginine 52. Tyrosine 114 contributes to the alpha-D-glucose 1-phosphate binding site. AMP is bound at residue arginine 130. Alpha-D-glucose 1-phosphate is bound by residues glycine 179, 194 to 195 (EK), and serine 212. Positions 370 and 386 each coordinate AMP. Residues 419 to 423 (REMLR) and 429 to 431 (QER) each bind beta-D-fructose 1,6-bisphosphate.

Belongs to the bacterial/plant glucose-1-phosphate adenylyltransferase family. In terms of assembly, homotetramer.

It catalyses the reaction alpha-D-glucose 1-phosphate + ATP + H(+) = ADP-alpha-D-glucose + diphosphate. Its pathway is glycan biosynthesis; glycogen biosynthesis. Its activity is regulated as follows. Allosterically activated by fructose-1,6-bisphosphate (F16BP) and inhibited by AMP. In terms of biological role, involved in the biosynthesis of ADP-glucose, a building block required for the elongation reactions to produce glycogen. Catalyzes the reaction between ATP and alpha-D-glucose 1-phosphate (G1P) to produce pyrophosphate and ADP-Glc. The chain is Glucose-1-phosphate adenylyltransferase from Escherichia coli O127:H6 (strain E2348/69 / EPEC).